We begin with the raw amino-acid sequence, 45 residues long: uncharacterized protein (45 aa).

This is an uncharacterized protein from Treponema pallidum (strain Nichols).